The chain runs to 581 residues: Pyridine nucleotide-disulfide oxidoreductase domain-containing protein 2 (581 aa).

38–71 (VVIGAGHNGLVVAAYLQRLGVNTAVFERRHVIGG) contributes to the FAD binding site.

Belongs to the carotenoid/retinoid oxidoreductase family. In terms of assembly, interacts with COX5B; this interaction may contribute to localize PYROXD2 to the inner face of the inner mitochondrial membrane.

The protein localises to the mitochondrion matrix. Its function is as follows. Probable oxidoreductase that may play a role as regulator of mitochondrial function. This Pongo abelii (Sumatran orangutan) protein is Pyridine nucleotide-disulfide oxidoreductase domain-containing protein 2.